The sequence spans 79 residues: Hematopoietic cell signal transducer (79 aa).

Positions 1–18 (MAPPGGILFLLLLPVAAA) are cleaved as a signal peptide. Residues 19-35 (QVTSGSCSGCGPLSLPL) lie on the Extracellular side of the membrane. The helical transmembrane segment at 36–56 (LAGLVAADAVVSLLIVVGVFV) threads the bilayer. Topologically, residues 57-79 (CGRPRSRPTQEDGKIYINMPGRG) are cytoplasmic. Y72 bears the Phosphotyrosine mark. Residues 72–74 (YIN) are GRB2 binding site. Residues 72-75 (YINM) form a PIK3R1 binding site region.

This sequence belongs to the DAP10 family. As to quaternary structure, homodimer; Disulfide-linked. Heterohexamer composed of four subunits of HCST/DAP10 and two subunits of KLRK1. Interacts (via transmembrane domain) with KLRK1 (via transmembrane domain); the interaction is required for KLRK1 NK cell surface and induces NK cell-mediated cytotoxicity. Interacts with PIK3R1 and GRB2. Interacts with CLEC5A. Forms an CLEC5A/TYROBP/HCST trimolecular complex depending almost solely on TYROBP. Interacts with KLRK1. Interacts with CD300H. Post-translationally, phosphorylated; PIK3R1 and GRB2 associate specifically with tyrosine-phosphorylated HCST. O-glycosylated. As to expression, expressed predominantly in lymphohematopoietic tissues.

It localises to the membrane. Transmembrane adapter protein which associates with KLRK1 to form an activation receptor KLRK1-HCST in lymphoid and myeloid cells; this receptor plays a major role in triggering cytotoxicity against target cells expressing cell surface ligands such as MHC class I chain-related MICA and MICB, and UL16-binding proteins (ULBPs); these ligands are up-regulated by stress conditions and pathological state such as viral infection and tumor transformation. Functions as a docking site for PI3-kinase PIK3R1 and GRB2. Interaction of ULBPs with KLRK1-HCST triggers calcium mobilization and activation of the PIK3R1, MAP2K/ERK, and JAK2/STAT5 signaling pathways. Both PIK3R1 and GRB2 are required for full KLRK1-HCST-mediated activation and ultimate killing of target cells. In NK cells, KLRK1-HCST signaling directly induces cytotoxicity and enhances cytokine production initiated via DAP12/TYROBP-associated receptors. In T-cells, it provides primarily costimulation for TCR-induced signals. KLRK1-HCST receptor plays a role in immune surveillance against tumors and is required for cytolysis of tumors cells; indeed, melanoma cells that do not express KLRK1 ligands escape from immune surveillance mediated by NK cells. This chain is Hematopoietic cell signal transducer (HCST), found in Sus scrofa (Pig).